Consider the following 433-residue polypeptide: Adenylosuccinate synthetase (433 aa).

Residues Gly-11–Lys-17 and Gly-39–Thr-41 each bind GTP. Asp-12 functions as the Proton acceptor in the catalytic mechanism. Asp-12 and Gly-39 together coordinate Mg(2+). Residues Asp-12–Lys-15, Asn-37–His-40, Thr-134, Arg-148, Asn-230, Thr-245, and Arg-309 contribute to the IMP site. His-40 acts as the Proton donor in catalysis. Position 305-311 (Val-305–Arg-311) interacts with substrate. GTP is bound by residues Arg-311, Lys-337 to Asp-339, and Gly-419 to Gly-421.

The protein belongs to the adenylosuccinate synthetase family. As to quaternary structure, homodimer. Requires Mg(2+) as cofactor.

Its subcellular location is the cytoplasm. It catalyses the reaction IMP + L-aspartate + GTP = N(6)-(1,2-dicarboxyethyl)-AMP + GDP + phosphate + 2 H(+). It functions in the pathway purine metabolism; AMP biosynthesis via de novo pathway; AMP from IMP: step 1/2. In terms of biological role, plays an important role in the de novo pathway and in the salvage pathway of purine nucleotide biosynthesis. Catalyzes the first committed step in the biosynthesis of AMP from IMP. In Saccharomyces cerevisiae (strain YJM789) (Baker's yeast), this protein is Adenylosuccinate synthetase.